Reading from the N-terminus, the 351-residue chain is Mediator of RNA polymerase II transcription subunit 18 (351 aa).

Positions G153–S231 are disordered. A compositionally biased stretch (basic and acidic residues) spans N163–D204. Positions N205–N216 are enriched in acidic residues. A compositionally biased stretch (polar residues) spans P217–S231.

This sequence belongs to the Mediator complex subunit 18 family. In terms of assembly, component of the Mediator complex.

It localises to the nucleus. Its function is as follows. Component of the Mediator complex, a coactivator involved in the regulated transcription of nearly all RNA polymerase II-dependent genes. Mediator functions as a bridge to convey information from gene-specific regulatory proteins to the basal RNA polymerase II transcription machinery. Mediator is recruited to promoters by direct interactions with regulatory proteins and serves as a scaffold for the assembly of a functional preinitiation complex with RNA polymerase II and the general transcription factors. This chain is Mediator of RNA polymerase II transcription subunit 18 (SRB5), found in Candida albicans (strain SC5314 / ATCC MYA-2876) (Yeast).